Consider the following 154-residue polypeptide: uncharacterized protein (154 aa).

Transmembrane regions (helical) follow at residues 19–39 and 51–71; these read LFAYAAAFLIAVAHVAGGLLL and ADQVAMGALGLVLAGAVLLFA.

The protein localises to the cell membrane. This is an uncharacterized protein from Mycobacterium tuberculosis (strain CDC 1551 / Oshkosh).